The primary structure comprises 313 residues: Protein FixB (313 aa).

255 to 283 (LYLAVGISGQIQHMVGANASQTIFAINKD) provides a ligand contact to FAD.

It belongs to the ETF alpha-subunit/FixB family. As to quaternary structure, heterodimer of FixA and FixB.

It participates in amine and polyamine metabolism; carnitine metabolism. Required for anaerobic carnitine reduction. May bring reductant to CaiA. The polypeptide is Protein FixB (Escherichia coli (strain 55989 / EAEC)).